The primary structure comprises 499 residues: Salviol synthase (499 aa).

Residues 4–24 (HIPSLVLCISFFIFFKIVSKL) traverse the membrane as a helical segment. Position 436 (C436) interacts with heme.

Belongs to the cytochrome P450 family. Requires heme as cofactor. As to expression, expressed in leaf glandular trichomes.

It is found in the membrane. The enzyme catalyses ferruginol + reduced [NADPH--hemoprotein reductase] + O2 = salviol + oxidized [NADPH--hemoprotein reductase] + H2O + H(+). Its pathway is secondary metabolite biosynthesis; terpenoid biosynthesis. Its function is as follows. Monooxygenase involved in the biosynthesis of labdane-related diterpenes natural products. Catalyzes the oxidation of ferruginol to produce salviol. Salviol is an intermediate in the biosynthesis of carnosate, a potent antioxidant. This Salvia pomifera (Apple sage) protein is Salviol synthase.